The chain runs to 750 residues: GRIP and coiled-coil domain-containing protein C27D7.02c (750 aa).

2 disordered regions span residues 14-53 (AQGQ…AKNM) and 188-280 (KTVE…RDIA). Composition is skewed to basic and acidic residues over residues 18–34 (EEAK…DQLR) and 188–198 (KTVETKNDVPE). Positions 28-182 (QEEDQLRRNN…AQSIEQEVIS (155 aa)) form a coiled coil. Polar residues predominate over residues 201 to 213 (RPSTDTIGVSSAL). Residues 213-243 (LSKKKKKRNRKNQKKKSTKQNIEATTENDAL) are a coiled coil. Residues 214 to 230 (SKKKKKRNRKNQKKKST) are compositionally biased toward basic residues. The segment covering 233–251 (NIEATTENDALSESISTPD) has biased composition (polar residues). The segment covering 269-280 (ADSKEEERRDIA) has biased composition (basic and acidic residues). The stretch at 344–665 (KLVEELTKQL…YEHLQKSFKN (322 aa)) forms a coiled coil. The segment at 672–703 (KQQPSNHGRNSSVSRSSSSVEVNSKHPGSDDM) is disordered. Over residues 676-693 (SNHGRNSSVSRSSSSVEV) the composition is skewed to low complexity. The segment covering 694 to 703 (NSKHPGSDDM) has biased composition (basic and acidic residues). Residues 700–748 (SDDMLIDKEYTRNILFQFLEQRDRRPEIVNLLSILLDLSEEQKQKLLSV) enclose the GRIP domain.

It localises to the cytoplasm. This is GRIP and coiled-coil domain-containing protein C27D7.02c from Schizosaccharomyces pombe (strain 972 / ATCC 24843) (Fission yeast).